Here is a 97-residue protein sequence, read N- to C-terminus: Cell division protein FtsL (97 aa).

Topologically, residues 1 to 11 (MSRLFVKRLPT) are cytoplasmic. The helical transmembrane segment at 12–32 (GSFLMLLLYIGLLLSAIAVAY) threads the bilayer. Residues 33-97 (STYWNRQLLN…DPAEVRMVAP (65 aa)) are Periplasmic-facing.

The protein belongs to the FtsL family. In terms of assembly, part of a complex composed of FtsB, FtsL and FtsQ.

It localises to the cell inner membrane. Essential cell division protein. May link together the upstream cell division proteins, which are predominantly cytoplasmic, with the downstream cell division proteins, which are predominantly periplasmic. The chain is Cell division protein FtsL from Pseudomonas aeruginosa (strain ATCC 15692 / DSM 22644 / CIP 104116 / JCM 14847 / LMG 12228 / 1C / PRS 101 / PAO1).